The sequence spans 306 residues: Dirigent protein 24 (306 aa).

Positions 1–21 are cleaved as a signal peptide; it reads MAKALSLTIFLFLLIASNVQS. Residues 36–61 are disordered; the sequence is PQVPEEEDDSPQAVTTTPTPIPLPGP.

The protein belongs to the plant dirigent protein family. In terms of assembly, homodimer.

Its subcellular location is the secreted. The protein resides in the extracellular space. It is found in the apoplast. Dirigent proteins impart stereoselectivity on the phenoxy radical-coupling reaction, yielding optically active lignans from two molecules of coniferyl alcohol in the biosynthesis of lignans, flavonolignans, and alkaloids and thus plays a central role in plant secondary metabolism. The polypeptide is Dirigent protein 24 (DIR24) (Arabidopsis thaliana (Mouse-ear cress)).